We begin with the raw amino-acid sequence, 842 residues long: Protein translocase subunit SecA (842 aa).

Residues Gln91, 109-113 (GEGKT), and Asp498 contribute to the ATP site. Residues 798-824 (QGQHVSAEDGKEKVKPQPVVKDNHIGR) are compositionally biased toward basic and acidic residues. The segment at 798–827 (QGQHVSAEDGKEKVKPQPVVKDNHIGRNDP) is disordered. Zn(2+)-binding residues include Cys828, Cys830, Cys839, and Cys840.

The protein belongs to the SecA family. In terms of assembly, monomer and homodimer. Part of the essential Sec protein translocation apparatus which comprises SecA, SecYEG and auxiliary proteins SecDF. Other proteins may also be involved. It depends on Zn(2+) as a cofactor.

It localises to the cell membrane. The protein localises to the cytoplasm. It carries out the reaction ATP + H2O + cellular proteinSide 1 = ADP + phosphate + cellular proteinSide 2.. In terms of biological role, part of the Sec protein translocase complex. Interacts with the SecYEG preprotein conducting channel. Has a central role in coupling the hydrolysis of ATP to the transfer of proteins into and across the cell membrane, serving as an ATP-driven molecular motor driving the stepwise translocation of polypeptide chains across the membrane. This Staphylococcus carnosus (strain TM300) protein is Protein translocase subunit SecA.